The following is a 547-amino-acid chain: Putative nitric oxide synthase (547 aa).

The segment covering 24-40 (QLAPNPSSFSPTRAAST) has biased composition (low complexity). Disordered stretches follow at residues 24 to 57 (QLAPNPSSFSPTRAASTAPPPPEGAGPAAPSRGD) and 72 to 91 (VLAPEDAERRRRRREKRKAL). A compositionally biased stretch (basic residues) spans 81-91 (RRRRREKRKAL). Residues 167–343 (ADQLRDKLSY…LYDTPGVHLH (177 aa)) enclose the CP-type G domain.

It belongs to the TRAFAC class YlqF/YawG GTPase family. NOA1 subfamily.

It catalyses the reaction 2 L-arginine + 3 NADPH + 4 O2 + H(+) = 2 L-citrulline + 2 nitric oxide + 3 NADP(+) + 4 H2O. Produces nitric oxide (NO) which is a messenger molecule involved in hormonal signaling and defense responses in plant. This is Putative nitric oxide synthase from Oryza sativa subsp. japonica (Rice).